The primary structure comprises 142 residues: Pleckstrin homology-like domain family A member 2 (142 aa).

At Ser3 the chain carries Phosphoserine. The region spanning 7 to 99 is the PH domain; it reads VLREGELEKR…WNASITLALI (93 aa).

This sequence belongs to the PHLDA2 family.

It is found in the cytoplasm. It localises to the membrane. In terms of biological role, plays a role in regulating placenta growth. May act via its PH domain that competes with other PH domain-containing proteins, thereby preventing their binding to membrane lipids. The polypeptide is Pleckstrin homology-like domain family A member 2 (PHLDA2) (Bos taurus (Bovine)).